The sequence spans 474 residues: tRNA-2-methylthio-N(6)-dimethylallyladenosine synthase (474 aa).

The MTTase N-terminal domain maps to 3-120; sequence KKLHIKTWGC…LPEMINSVRG (118 aa). 6 residues coordinate [4Fe-4S] cluster: Cys-12, Cys-49, Cys-83, Cys-157, Cys-161, and Cys-164. The Radical SAM core domain occupies 143–375; sequence RAEGPTAFVS…QERINQQAMA (233 aa). A TRAM domain is found at 378–441; that stretch reads RRMLGSTQRI…PNSLRGKVVR (64 aa).

The protein belongs to the methylthiotransferase family. MiaB subfamily. As to quaternary structure, monomer. Requires [4Fe-4S] cluster as cofactor.

It localises to the cytoplasm. The catalysed reaction is N(6)-dimethylallyladenosine(37) in tRNA + (sulfur carrier)-SH + AH2 + 2 S-adenosyl-L-methionine = 2-methylsulfanyl-N(6)-dimethylallyladenosine(37) in tRNA + (sulfur carrier)-H + 5'-deoxyadenosine + L-methionine + A + S-adenosyl-L-homocysteine + 2 H(+). Functionally, catalyzes the methylthiolation of N6-(dimethylallyl)adenosine (i(6)A), leading to the formation of 2-methylthio-N6-(dimethylallyl)adenosine (ms(2)i(6)A) at position 37 in tRNAs that read codons beginning with uridine. The chain is tRNA-2-methylthio-N(6)-dimethylallyladenosine synthase from Salmonella arizonae (strain ATCC BAA-731 / CDC346-86 / RSK2980).